Consider the following 190-residue polypeptide: MIGRISGQLAEKNPPEVLVDCNGVGYEVLVPMSTFYNLPGLGEKVSLLTHFVVREDAQILYGFGSATERAAFRQLIKISGVGPRTALSVLSGMSVEELAQAVTHQEAGRIIKVPGIGKKTAERLLLELKGKLGADIGVQVSVSSDSQSDILQALVALGYSDRDAALALKALPKDIGVSDGIKLALKALAK.

Residues 1-64 form a domain I region; sequence MIGRISGQLA…EDAQILYGFG (64 aa). The segment at 65–137 is domain II; that stretch reads SATERAAFRQ…LKGKLGADIG (73 aa). Positions 137–141 are flexible linker; that stretch reads GVQVS. The interval 142-190 is domain III; it reads VSSDSQSDILQALVALGYSDRDAALALKALPKDIGVSDGIKLALKALAK.

The protein belongs to the RuvA family. In terms of assembly, homotetramer. Forms an RuvA(8)-RuvB(12)-Holliday junction (HJ) complex. HJ DNA is sandwiched between 2 RuvA tetramers; dsDNA enters through RuvA and exits via RuvB. An RuvB hexamer assembles on each DNA strand where it exits the tetramer. Each RuvB hexamer is contacted by two RuvA subunits (via domain III) on 2 adjacent RuvB subunits; this complex drives branch migration. In the full resolvosome a probable DNA-RuvA(4)-RuvB(12)-RuvC(2) complex forms which resolves the HJ.

It is found in the cytoplasm. Functionally, the RuvA-RuvB-RuvC complex processes Holliday junction (HJ) DNA during genetic recombination and DNA repair, while the RuvA-RuvB complex plays an important role in the rescue of blocked DNA replication forks via replication fork reversal (RFR). RuvA specifically binds to HJ cruciform DNA, conferring on it an open structure. The RuvB hexamer acts as an ATP-dependent pump, pulling dsDNA into and through the RuvAB complex. HJ branch migration allows RuvC to scan DNA until it finds its consensus sequence, where it cleaves and resolves the cruciform DNA. This Polaromonas sp. (strain JS666 / ATCC BAA-500) protein is Holliday junction branch migration complex subunit RuvA.